We begin with the raw amino-acid sequence, 330 residues long: RNA polymerase sigma factor RpoS (330 aa).

The sigma-70 factor domain-1 stretch occupies residues 56–89; that stretch reads DATQLYLGEIGYSPLLTAEEEVYFARRALRGDVA. A sigma-70 factor domain-2 region spans residues 94-164; it reads MIESNLRLVV…ERAIMNQTRT (71 aa). Residues 118–121 carry the Interaction with polymerase core subunit RpoC motif; the sequence is DLIE. Residues 174–249 form a sigma-70 factor domain-3 region; it reads ELNVYLRTAR…DEKENGPEDT (76 aa). The interval 262–315 is sigma-70 factor domain-4; it reads WLFELNAKQREVLARRFGLLGYEAATLEDVGREIGLTRERVRQIQVEGLRRLRE. A DNA-binding region (H-T-H motif) is located at residues 288–307; sequence LEDVGREIGLTRERVRQIQV.

This sequence belongs to the sigma-70 factor family. RpoS subfamily. In terms of assembly, interacts with the RNA polymerase core enzyme.

The protein localises to the cytoplasm. Its function is as follows. Sigma factors are initiation factors that promote the attachment of RNA polymerase to specific initiation sites and are then released. This sigma factor is the master transcriptional regulator of the stationary phase and the general stress response. This is RNA polymerase sigma factor RpoS from Salmonella dublin.